Here is a 270-residue protein sequence, read N- to C-terminus: 4-hydroxy-tetrahydrodipicolinate reductase (270 aa).

Residues 11–16 and E37 contribute to the NAD(+) site; that span reads GAGGRM. R38 lines the NADP(+) pocket. NAD(+) contacts are provided by residues 101-103 and 125-128; these read GTT and APNM. The active-site Proton donor/acceptor is the H158. H159 contacts (S)-2,3,4,5-tetrahydrodipicolinate. K162 serves as the catalytic Proton donor. 168-169 serves as a coordination point for (S)-2,3,4,5-tetrahydrodipicolinate; that stretch reads GT.

The protein belongs to the DapB family.

Its subcellular location is the cytoplasm. It catalyses the reaction (S)-2,3,4,5-tetrahydrodipicolinate + NAD(+) + H2O = (2S,4S)-4-hydroxy-2,3,4,5-tetrahydrodipicolinate + NADH + H(+). The enzyme catalyses (S)-2,3,4,5-tetrahydrodipicolinate + NADP(+) + H2O = (2S,4S)-4-hydroxy-2,3,4,5-tetrahydrodipicolinate + NADPH + H(+). Its pathway is amino-acid biosynthesis; L-lysine biosynthesis via DAP pathway; (S)-tetrahydrodipicolinate from L-aspartate: step 4/4. In terms of biological role, catalyzes the conversion of 4-hydroxy-tetrahydrodipicolinate (HTPA) to tetrahydrodipicolinate. This chain is 4-hydroxy-tetrahydrodipicolinate reductase, found in Shewanella baltica (strain OS223).